Reading from the N-terminus, the 1042-residue chain is Isoleucine--tRNA ligase (1042 aa).

The 'HIGH' region motif lies at 48–58 (PFATGLPHFGH). Positions 594–598 (KMSKS) match the 'KMSKS' region motif. Residue Lys-597 participates in ATP binding.

Belongs to the class-I aminoacyl-tRNA synthetase family. IleS type 2 subfamily. As to quaternary structure, monomer. The cofactor is Zn(2+).

The protein resides in the cytoplasm. It catalyses the reaction tRNA(Ile) + L-isoleucine + ATP = L-isoleucyl-tRNA(Ile) + AMP + diphosphate. Functionally, catalyzes the attachment of isoleucine to tRNA(Ile). As IleRS can inadvertently accommodate and process structurally similar amino acids such as valine, to avoid such errors it has two additional distinct tRNA(Ile)-dependent editing activities. One activity is designated as 'pretransfer' editing and involves the hydrolysis of activated Val-AMP. The other activity is designated 'posttransfer' editing and involves deacylation of mischarged Val-tRNA(Ile). This chain is Isoleucine--tRNA ligase, found in Borreliella afzelii (strain PKo) (Borrelia afzelii).